We begin with the raw amino-acid sequence, 289 residues long: Ribonuclease H2 subunit A (289 aa).

The region spanning 20–249 (PFVMGIDEAG…TETAMRGACF (230 aa)) is the RNase H type-2 domain. Residues Asp26, Glu27, and Asp134 each contribute to the a divalent metal cation site.

It belongs to the RNase HII family. Eukaryotic subfamily. Requires Mn(2+) as cofactor. Mg(2+) is required as a cofactor.

It catalyses the reaction Endonucleolytic cleavage to 5'-phosphomonoester.. Endonuclease that specifically degrades the RNA of RNA-DNA hybrids. Participates in DNA replication. The chain is Ribonuclease H2 subunit A (rnaseh2A) from Dictyostelium discoideum (Social amoeba).